A 204-amino-acid chain; its full sequence is MKVVAFERQQQGTGASRRLRNAGKTTGIVYGGEVAPQMIELDHNALWHALKKEAFHSSILDLEVAGKSQRVLLRDVQYHPFRQLVLHVDFQRIDPKKKLHTKAPLHFLNAETSPAVKLSSAVVSHVVTEIEIECLPADLPEFLEVDLSKIEAGQSLHAKDIALPNGVALTAHVDAENPVIASATIPAGAVSDEAAAGEGETPAA.

The protein belongs to the bacterial ribosomal protein bL25 family. CTC subfamily. As to quaternary structure, part of the 50S ribosomal subunit; part of the 5S rRNA/L5/L18/L25 subcomplex. Contacts the 5S rRNA. Binds to the 5S rRNA independently of L5 and L18.

In terms of biological role, this is one of the proteins that binds to the 5S RNA in the ribosome where it forms part of the central protuberance. The protein is Large ribosomal subunit protein bL25 of Burkholderia pseudomallei (strain 668).